Reading from the N-terminus, the 610-residue chain is Serine/threonine-protein kinase VRK1 (610 aa).

One can recognise a Protein kinase domain in the interval 32-384; sequence FIVGKQFATG…PRKRTTRKAV (353 aa). ATP-binding positions include 38-46 and lysine 61; that span reads FATGGFGRI. Catalysis depends on aspartate 167, which acts as the Proton acceptor. 4 disordered regions span residues 317 to 476, 498 to 530, 544 to 577, and 590 to 610; these read IQKT…NKVA, ISVASDKSPTTSTPSSSSGLRSKRKSSEDVGEG, KKAKTKSGISSATKASPTELRRVPGVRNFPKGRR, and ERLASRQTKPTFDDSSCSSEV. A compositionally biased stretch (basic and acidic residues) spans 352–373; it reads AVKEESDNKDNDEVEVKPEKKA. Residues 388–397 are compositionally biased toward acidic residues; sequence NDSDDNEEQY. Over residues 447–458 the composition is skewed to low complexity; it reads TTPSSAASTSRS. The segment covering 465–474 has biased composition (polar residues); that stretch reads LTSSTASSNK. A compositionally biased stretch (low complexity) spans 502-517; sequence SDKSPTTSTPSSSSGL. Composition is skewed to polar residues over residues 550–559 and 594–610; these read SGISSATKAS and SRQTKPTFDDSSCSSEV.

It belongs to the protein kinase superfamily. CK1 Ser/Thr protein kinase family. VRK subfamily. In terms of processing, autophosphorylates in vitro. In terms of tissue distribution, present in germ cells at all stages of progression from the mitotic zone to mature oocytes, but not in maturing spermatids (at the protein level). Expressed in the ventral nerve cord and vulva cells.

The protein localises to the nucleus. The protein resides in the cytoplasm. It is found in the cajal body. The enzyme catalyses L-seryl-[protein] + ATP = O-phospho-L-seryl-[protein] + ADP + H(+). The catalysed reaction is L-threonyl-[protein] + ATP = O-phospho-L-threonyl-[protein] + ADP + H(+). In terms of biological role, serine/threonine kinase that phosphorylates baf-1, thus regulating the association of baf-1 with chromatin and nuclear membrane proteins during nuclear envelope formation. May act through the egl-17 signaling pathway. Essential in hermaphrodites for formation of the vulva, uterus, and uterine seam cells and for development and maintenance of the somatic gonad and thus the germ line. Acts to prevent cep-1 from triggering an inappropriate cell cycle arrest, thereby promoting germ cell proliferation. Regulates anchor cell polarity and the timing of anchor cell invasion through the basement membranes separating vulval and somatic gonadal cells during the L3 larval stage. The protein is Serine/threonine-protein kinase VRK1 of Caenorhabditis elegans.